Reading from the N-terminus, the 446-residue chain is Divalent metal cation transporter MntH (446 aa).

A run of 11 helical transmembrane segments spans residues 32–52 (FSFL…GNWI), 59–79 (AQFG…AMLL), 107–127 (AFVF…AEVI), 139–159 (IPLL…LFIM), 168–188 (AIVG…VFIA), 210–230 (GALF…NLYL), 264–284 (SIAF…FFGV), 303–323 (PLLG…ALLA), 355–375 (LITR…FNSN), 381–401 (QLLV…LIPL), and 420–440 (VNII…YLII).

It belongs to the NRAMP family.

Its subcellular location is the cell membrane. H(+)-stimulated, divalent metal cation uptake system. The polypeptide is Divalent metal cation transporter MntH (Staphylococcus saprophyticus subsp. saprophyticus (strain ATCC 15305 / DSM 20229 / NCIMB 8711 / NCTC 7292 / S-41)).